Here is a 488-residue protein sequence, read N- to C-terminus: Solute carrier family 41 member 3 (488 aa).

Composition is skewed to basic and acidic residues over residues 1-19 (MEGTEARQRRLEGCGRLKE) and 27-36 (DAGRLPKASE). The interval 1–36 (MEGTEARQRRLEGCGRLKELGPLPSHDAGRLPKASE) is disordered. The next 9 membrane-spanning stretches (helical) occupy residues 63–83 (LIIGFQVVIPFLLAGVGLSWA), 147–167 (LAVVQVQATVVGLLAAVASLM), 189–209 (VITAFLAALALGILMICIVIG), 220–240 (IATPIAASLGDLITLSILALM), 251–271 (WYLTPLVCVGFLALTPLWLFI), 284–304 (YGWFPIILAMIISSFGGLILS), 377–397 (VLLFLVVPGHLIFFYLICLVE), 406–426 (IFILLYLVAGVVQVVILLYLA), and 450–470 (GLGDLLGTSLLALCFFLDWLL).

The protein belongs to the SLC41A transporter family.

The protein resides in the mitochondrion inner membrane. It carries out the reaction Mg(2+)(in) + 2 Na(+)(out) = Mg(2+)(out) + 2 Na(+)(in). Functionally, na(+)/Mg(2+) ion exchanger that acts as a predominant Mg(2+) efflux system at the mitochondrial inner membrane. The protein is Solute carrier family 41 member 3 (Slc41a3) of Mus musculus (Mouse).